The sequence spans 369 residues: Flagellar P-ring protein (369 aa).

Residues 1-22 (MLNFKHLMAAALLLSTSLGVQA) form the signal peptide.

Belongs to the FlgI family. In terms of assembly, the basal body constitutes a major portion of the flagellar organelle and consists of four rings (L,P,S, and M) mounted on a central rod.

It localises to the periplasm. The protein localises to the bacterial flagellum basal body. In terms of biological role, assembles around the rod to form the L-ring and probably protects the motor/basal body from shearing forces during rotation. The polypeptide is Flagellar P-ring protein (Pseudomonas fluorescens (strain ATCC BAA-477 / NRRL B-23932 / Pf-5)).